Here is a 1295-residue protein sequence, read N- to C-terminus: MRVLLILLAFFAPIASQLMGGECGREGACSVNGKCYNGKLIETYWCRCKKGFGGAFCERECDLDCKRGEKCIYDVYGENPTCICQDCEDETPPTERTQKGCEEGYGGPDCKTPLFSGVNPCDSDPCNNGLCYPFYGGFQCICNNGYGGSYCEEGIDHCAQNECAEGSTCVNSVYNYYCDCPIGKSGRYCERTECALMGNICNHGRCIPNRDEDKNFRCVCDSGYEGEFCNKDKNECLIEETCVNNSTCFNLHGDFTCTCKPGYAGKYCEEAIDMCKDYVCQNDGYCAHDSNQMPICYCEQGFTGQRCEIECPSGFGGIHCDLPLQRPHCSRSNGTCYNDGRCINGFCVCEPDYIGDRCEINRKDFKFPDIQSCKYNPCVNNATCIDLKNSGYSCHCPLGFYGLNCEQHLLCTPTTCANGGTCEGVNGVIRCNCPNGFSGDYCEIKDRQLCSRHPCKNGGVCKNTGYCECQYGYTGPTCEEVLVIEKSKETVIRDLCEQRKCMDLASNGICNPECNLEECNFDGGDCSGGQRPFSKCQYPARCADQFANGVCNQECNNEECLYDGLDCQSELFRCPAHIRKHCIERRGDGVCNLECSFIGCGFDGGDCNNGTEAIILSDIRIKVQIDPIEFQATGGETLMQISANLRATVRIQRDELGPLVFRWDGEHEMERVEMNSSKLEDQFVLSHHVRRYRQAVVTGIVLYLEVEEICKPEFCRFSTAQSVVDLIAAGLVKSDGRMSLGLPITEAMVAVPKRNEIDEGWSRSQVILFACIAFLAFGTVVAGVIAKNGPERSRKRKMVNATVWMPPMESTNEKGRRNQSNHSSQCSLLDNSAYYHPNTKRHCSDYSTGYNGEQYSQIYPQTLANGYPGDYNELNFDFQSETFAPADLPADEIPLHVQAAGPDAITAPITNESVNQVDSKYRRRVLHWLAANVRGKPEDVITTEAIRCLKAGADVNARDCDENTALMLAVRAHRVRLSVVLLREGANPTIFNNSERSALHEAVVNKDLRILRHLLTDKRLLKEIDELDRNGMTALMLVARELGKHQVEMAELLLSKGAKLDYDGAARKDSNKYKGRTALHYAAMHDNEEMVIMLVRRSSNKDKQDEDGRTPIMLAAKEGCEKTVQYLALNDASLGIVDSMDMTAAQVAEASYHHELAAFLRQVANERHRNDIMRQQIVKSGHGAKSGRQTVKNIKRAGSRKTPTSAASSRETNHLTPPPSDGSFSSPSPHYYPTTTSTPNRMETSPEYMFNHEMAPPVNAMWYTTPPPYQDPNYRHVPPNTAFQNAEQMNGSFYC.

A signal peptide spans 1-15 (MRVLLILLAFFAPIA). Over 16–764 (SQLMGGECGR…NEIDEGWSRS (749 aa)) the chain is Extracellular. EGF-like domains are found at residues 19-58 (MGGECGREGACSVNGKCYNGKLIETYWCRCKKGFGGAFCE), 117-152 (GVNPCDSDPCNNGLCYPFYGGFQCICNNGYGGSYCE), 154-190 (GIDHCAQNECAEGSTCVNSVYNYYCDCPIGKSGRYCE), and 190-230 (ERTE…EFCN). Intrachain disulfides connect Cys23-Cys35, Cys29-Cys46, Cys48-Cys57, Cys121-Cys131, Cys126-Cys140, Cys142-Cys151, Cys158-Cys169, Cys163-Cys178, Cys180-Cys189, Cys201-Cys206, Cys220-Cys229, Cys236-Cys248, Cys242-Cys257, Cys259-Cys268, Cys275-Cys286, Cys280-Cys296, Cys298-Cys307, Cys329-Cys342, Cys336-Cys347, Cys349-Cys358, Cys373-Cys384, Cys378-Cys394, Cys396-Cys405, Cys411-Cys422, Cys416-Cys431, Cys433-Cys442, Cys450-Cys461, Cys455-Cys467, Cys469-Cys478, Cys496-Cys519, Cys501-Cys514, Cys510-Cys526, Cys536-Cys560, Cys542-Cys555, Cys551-Cys567, Cys582-Cys595, and Cys591-Cys607. The region spanning 232–269 (DKNECLIEETCVNNSTCFNLHGDFTCTCKPGYAGKYCE) is the EGF-like 5; calcium-binding domain. N-linked (GlcNAc...) asparagine glycans are attached at residues Asn244 and Asn245. EGF-like domains lie at 271–308 (AIDMCKDYVCQNDGYCAHDSNQMPICYCEQGFTGQRCE), 316–359 (GGIH…DRCE), 369–406 (DIQSCKYNPCVNNATCIDLKNSGYSCHCPLGFYGLNCE), 407–443 (QHLLCTPTTCANGGTCEGVNGVIRCNCPNGFSGDYCE), and 446–479 (DRQLCSRHPCKNGGVCKNTGYCECQYGYTGPTCE). The N-linked (GlcNAc...) asparagine glycan is linked to Asn333. Asn381 is a glycosylation site (N-linked (GlcNAc...) asparagine). LNR repeat units lie at residues 496–532 (CEQRKCMDLASNGICNPECNLEECNFDGGDCSGGQRP), 536–577 (CQYP…CPAH), and 581–612 (HCIERRGDGVCNLECSFIGCGFDGGDCNNGTE). N-linked (GlcNAc...) asparagine glycosylation is found at Asn609 and Asn675. Residues 765–786 (QVILFACIAFLAFGTVVAGVIA) traverse the membrane as a helical segment. Over 787 to 1295 (KNGPERSRKR…AEQMNGSFYC (509 aa)) the chain is Cytoplasmic. ANK repeat units follow at residues 961 to 990 (DENTALMLAVRAHRVRLSVVLLREGANPTI), 994 to 1023 (SERSALHEAVVNKDLRILRHLLTDKRLLKE), 1030 to 1062 (NGMTALMLVARELGKHQVEMAELLLSKGAKLDY), 1074 to 1103 (KGRTALHYAAMHDNEEMVIMLVRRSSNKDK), and 1107 to 1136 (DGRTPIMLAAKEGCEKTVQYLALNDASLGI). Positions 1177–1244 (IVKSGHGAKS…TTSTPNRMET (68 aa)) are disordered. Residues 1201-1210 (KTPTSAASSR) show a composition bias toward polar residues. Over residues 1221 to 1239 (DGSFSSPSPHYYPTTTSTP) the composition is skewed to low complexity.

As to quaternary structure, interacts with sel-10. When activated, the glp-1/Notch intracellular domain (NICD) may become a component of a complex consisting of at least the NICD, lag-1 and lag-3. Post-translationally, upon binding its ligands, it is cleaved (S2 cleavage) in its extracellular domain, close to the transmembrane domain. S2 cleavage is probably mediated by the metalloproteases adm-4 and sup-17. It is then cleaved (S3 cleavage) downstream of its transmembrane domain, releasing it from the cell membrane; S3 cleavage requires a multiprotein gamma-secretase complex, which may include presenilin sel-12. In terms of tissue distribution, expressed in the distal mitotic region of the germ line. May be absent from the gonadal distal tip cell (DTC).

The protein localises to the cell membrane. Its subcellular location is the cell projection. It localises to the axon. The protein resides in the nucleus. Functionally, essential signaling protein which has a major role in germline and embryonic development; involved in cell fate decisions that require cell-cell interactions. Probable membrane-bound receptor for putative ligands lag-2 and apx-1. Upon ligand activation, and releasing from the cell membrane, the glp-1/Notch intracellular domain (NICD) probably forms a transcriptional activator complex with lag-1 and lag-3 and regulates expression of various genes; targets in the germline include lst-1 and sygl-1. Involved in the specification of the cell fates of the blastomeres, ABa and ABp. Proper signaling by glp-1 induces ABa descendants to produce anterior pharyngeal cells, and ABp descendants to adopt a different fate. Contributes to the establishment of the dorsal-ventral axis in early embryos. Required in postmitotic neurons in order to maintain the developmentally arrested larval state known as dauer, probably in response to lag-2. Regulates germ cell mitotic proliferation probably by regulating MAP kinase phosphatase lip-1 expression. Required for oocyte growth control. Plays a negative role in lifespan. This Caenorhabditis elegans protein is Protein glp-1.